The following is a 360-amino-acid chain: Probable butyrate kinase (360 aa).

The protein belongs to the acetokinase family.

It is found in the cytoplasm. The enzyme catalyses butanoate + ATP = butanoyl phosphate + ADP. The protein is Probable butyrate kinase of Enterococcus faecalis (strain ATCC 700802 / V583).